We begin with the raw amino-acid sequence, 439 residues long: Dolichyl-diphosphooligosaccharide--protein glycosyltransferase 48 kDa subunit (439 aa).

The signal sequence occupies residues 1–25; that stretch reads MELGAAARAWSLLWLLLPLLGLVGA. The Lumenal segment spans residues 27-410; the sequence is GPRTLVLLDN…YERFIPSAYP (384 aa). Residues 411 to 430 form a helical membrane-spanning segment; it reads YYASAFSMMVGLFIFSVVFL. Over 431-439 the chain is Cytoplasmic; sequence HMKEKEKSD.

It belongs to the DDOST 48 kDa subunit family. Component of the oligosaccharyltransferase (OST) complex. OST exists in two different complex forms which contain common core subunits RPN1, RPN2, OST48, OST4, DAD1 and TMEM258, either STT3A or STT3B as catalytic subunits, and form-specific accessory subunits. STT3A complex assembly occurs through the formation of 3 subcomplexes. Subcomplex 1 contains RPN1 and TMEM258, subcomplex 2 contains the STT3A-specific subunits STT3A, DC2/OSTC, and KCP2 as well as the core subunit OST4, and subcomplex 3 contains RPN2, DAD1, and OST48. The STT3A complex can form stable complexes with the Sec61 complex or with both the Sec61 and TRAP complexes. Interacts with SMIM22.

It localises to the endoplasmic reticulum membrane. It functions in the pathway protein modification; protein glycosylation. In terms of biological role, subunit of the oligosaccharyl transferase (OST) complex that catalyzes the initial transfer of a defined glycan (Glc(3)Man(9)GlcNAc(2) in eukaryotes) from the lipid carrier dolichol-pyrophosphate to an asparagine residue within an Asn-X-Ser/Thr consensus motif in nascent polypeptide chains, the first step in protein N-glycosylation. N-glycosylation occurs cotranslationally and the complex associates with the Sec61 complex at the channel-forming translocon complex that mediates protein translocation across the endoplasmic reticulum (ER). All subunits are required for a maximal enzyme activity. Required for the assembly of both SST3A- and SS3B-containing OST complexes. In Sus scrofa (Pig), this protein is Dolichyl-diphosphooligosaccharide--protein glycosyltransferase 48 kDa subunit.